The sequence spans 250 residues: 3-deoxy-manno-octulosonate cytidylyltransferase (250 aa).

The protein belongs to the KdsB family.

It is found in the cytoplasm. The catalysed reaction is 3-deoxy-alpha-D-manno-oct-2-ulosonate + CTP = CMP-3-deoxy-beta-D-manno-octulosonate + diphosphate. It participates in nucleotide-sugar biosynthesis; CMP-3-deoxy-D-manno-octulosonate biosynthesis; CMP-3-deoxy-D-manno-octulosonate from 3-deoxy-D-manno-octulosonate and CTP: step 1/1. The protein operates within bacterial outer membrane biogenesis; lipopolysaccharide biosynthesis. Activates KDO (a required 8-carbon sugar) for incorporation into bacterial lipopolysaccharide in Gram-negative bacteria. This is 3-deoxy-manno-octulosonate cytidylyltransferase from Thioalkalivibrio sulfidiphilus (strain HL-EbGR7).